We begin with the raw amino-acid sequence, 498 residues long: Probable malate:quinone oxidoreductase (498 aa).

Belongs to the MQO family. The cofactor is FAD.

It catalyses the reaction (S)-malate + a quinone = a quinol + oxaloacetate. It functions in the pathway carbohydrate metabolism; tricarboxylic acid cycle; oxaloacetate from (S)-malate (quinone route): step 1/1. The polypeptide is Probable malate:quinone oxidoreductase (Prochlorococcus marinus (strain AS9601)).